The primary structure comprises 986 residues: Ephrin type-A receptor 4 (986 aa).

Positions 1 to 19 are cleaved as a signal peptide; it reads MAGVPVGALLPLLVGVCGA. The Extracellular portion of the chain corresponds to 20–547; it reads VTGSRVYPAN…PIIGDGTNPT (528 aa). One can recognise an Eph LBD domain in the interval 30-209; sequence EVTLLDSRSV…FYKKCPLTVR (180 aa). Residues N235, N340, and N408 are each glycosylated (N-linked (GlcNAc...) asparagine). Fibronectin type-III domains are found at residues 328–439 and 440–537; these read PPSA…TNQA and APSP…TVPS. A helical membrane pass occupies residues 548–569; the sequence is VLLVSVAGSVVLVVILIAAFVI. The Cytoplasmic portion of the chain corresponds to 570 to 986; it reads SRRRSKYSKA…QQMHGRMVPV (417 aa). Residues Y596 and Y602 each carry the phosphotyrosine; by autocatalysis modification. Residues 621-882 form the Protein kinase domain; that stretch reads IKIEKVIGVG…QIVNMLDKLI (262 aa). Residues 627-635 and K653 contribute to the ATP site; that span reads IGVGEFGEV. Catalysis depends on D746, which acts as the Proton acceptor. Y779 and Y928 each carry phosphotyrosine; by autocatalysis. The SAM domain occupies 911-975; that stretch reads SAVVSVSDWL…LSSVQAMRSQ (65 aa). The short motif at 984–986 is the PDZ-binding element; sequence VPV.

This sequence belongs to the protein kinase superfamily. Tyr protein kinase family. Ephrin receptor subfamily. As to quaternary structure, interacts with the src family kinase, p59-Fyn, through the major phosphorylation site at position Tyr-602. Interacts (via PDZ motif) with SIPA1L1 (via PDZ domain); controls neuronal morphology through regulation of the RAP1 (RAP1A or RAP1B) and RAP2 (RAP2A, RAP2B or RAP2C) GTPases. Expressed at high levels in brain, with expression also detected in the kidney, lung, muscle and thymus.

The protein localises to the cell membrane. It is found in the early endosome. The catalysed reaction is L-tyrosyl-[protein] + ATP = O-phospho-L-tyrosyl-[protein] + ADP + H(+). Its function is as follows. Receptor tyrosine kinase which binds membrane-bound ephrin family ligands residing on adjacent cells, leading to contact-dependent bidirectional signaling into neighboring cells. The signaling pathway downstream of the receptor is referred to as forward signaling while the signaling pathway downstream of the ephrin ligand is referred to as reverse signaling. Highly promiscuous, it has the unique property among Eph receptors to bind and to be physiologically activated by both GPI-anchored ephrin-A and transmembrane ephrin-B ligands including EFNA1 and EFNB3. Upon activation by ephrin ligands, modulates cell morphology and integrin-dependent cell adhesion through regulation of the Rac, Rap and Rho GTPases activity. Plays an important role in the development of the nervous system controlling different steps of axonal guidance including the establishment of the corticospinal projections. This Gallus gallus (Chicken) protein is Ephrin type-A receptor 4 (EPHA4).